Consider the following 186-residue polypeptide: Probable peptidyl-tRNA hydrolase 2 (186 aa).

This sequence belongs to the PTH2 family.

The catalysed reaction is an N-acyl-L-alpha-aminoacyl-tRNA + H2O = an N-acyl-L-amino acid + a tRNA + H(+). The natural substrate for this enzyme may be peptidyl-tRNAs which drop off the ribosome during protein synthesis. This Drosophila melanogaster (Fruit fly) protein is Probable peptidyl-tRNA hydrolase 2.